Reading from the N-terminus, the 155-residue chain is Endoribonuclease YbeY (155 aa).

His-120, His-124, and His-130 together coordinate Zn(2+).

Belongs to the endoribonuclease YbeY family. Zn(2+) serves as cofactor.

It localises to the cytoplasm. Single strand-specific metallo-endoribonuclease involved in late-stage 70S ribosome quality control and in maturation of the 3' terminus of the 16S rRNA. This chain is Endoribonuclease YbeY, found in Borreliella burgdorferi (strain ATCC 35210 / DSM 4680 / CIP 102532 / B31) (Borrelia burgdorferi).